Here is a 240-residue protein sequence, read N- to C-terminus: 4-hydroxy-tetrahydrodipicolinate reductase (240 aa).

Residues 8 to 13 (GSTGKM), 78 to 80 (GTT), and 102 to 105 (SANM) each bind NAD(+). His-134 acts as the Proton donor/acceptor in catalysis. His-135 contacts (S)-2,3,4,5-tetrahydrodipicolinate. Catalysis depends on Lys-138, which acts as the Proton donor. 144–145 (GT) is a (S)-2,3,4,5-tetrahydrodipicolinate binding site.

Belongs to the DapB family.

It is found in the cytoplasm. The enzyme catalyses (S)-2,3,4,5-tetrahydrodipicolinate + NAD(+) + H2O = (2S,4S)-4-hydroxy-2,3,4,5-tetrahydrodipicolinate + NADH + H(+). The catalysed reaction is (S)-2,3,4,5-tetrahydrodipicolinate + NADP(+) + H2O = (2S,4S)-4-hydroxy-2,3,4,5-tetrahydrodipicolinate + NADPH + H(+). The protein operates within amino-acid biosynthesis; L-lysine biosynthesis via DAP pathway; (S)-tetrahydrodipicolinate from L-aspartate: step 4/4. Catalyzes the conversion of 4-hydroxy-tetrahydrodipicolinate (HTPA) to tetrahydrodipicolinate. In Rickettsia canadensis (strain McKiel), this protein is 4-hydroxy-tetrahydrodipicolinate reductase.